A 270-amino-acid chain; its full sequence is MPELPEVETTRRGIAPYLEGQRVERVIVRERRLRWPIPEDLDVRLSGQRIVSVERRAKYLLLGAEAGTLISHLGMSGSLRLVESGTPASRHEHVDIELASGMSLRYTDPRRFGAMLWSLAPLEHELLRNLGPEPLTDAFAGQRLFELSRGRSMAVKPFIMDNAVVVGVGNIYASEALFAAGIDPRKPAGSISKARYLRLAEEIKRILAIAIERGGTTLRDFVGGDGQPGYFQQELFVYGRGGEFCKVCGSTLREIRLGQRASVYCPRCQR.

P2 functions as the Schiff-base intermediate with DNA in the catalytic mechanism. Catalysis depends on E3, which acts as the Proton donor. Catalysis depends on K58, which acts as the Proton donor; for beta-elimination activity. The DNA site is built by H91, R110, and R151. Residues 236–270 (FVYGRGGEFCKVCGSTLREIRLGQRASVYCPRCQR) form an FPG-type zinc finger. The active-site Proton donor; for delta-elimination activity is R260.

It belongs to the FPG family. Monomer. The cofactor is Zn(2+).

The catalysed reaction is Hydrolysis of DNA containing ring-opened 7-methylguanine residues, releasing 2,6-diamino-4-hydroxy-5-(N-methyl)formamidopyrimidine.. The enzyme catalyses 2'-deoxyribonucleotide-(2'-deoxyribose 5'-phosphate)-2'-deoxyribonucleotide-DNA = a 3'-end 2'-deoxyribonucleotide-(2,3-dehydro-2,3-deoxyribose 5'-phosphate)-DNA + a 5'-end 5'-phospho-2'-deoxyribonucleoside-DNA + H(+). Its function is as follows. Involved in base excision repair of DNA damaged by oxidation or by mutagenic agents. Acts as a DNA glycosylase that recognizes and removes damaged bases. Has a preference for oxidized purines, such as 7,8-dihydro-8-oxoguanine (8-oxoG). Has AP (apurinic/apyrimidinic) lyase activity and introduces nicks in the DNA strand. Cleaves the DNA backbone by beta-delta elimination to generate a single-strand break at the site of the removed base with both 3'- and 5'-phosphates. In Pseudomonas paraeruginosa (strain DSM 24068 / PA7) (Pseudomonas aeruginosa (strain PA7)), this protein is Formamidopyrimidine-DNA glycosylase.